Here is a 151-residue protein sequence, read N- to C-terminus: 18 kDa heat shock protein (151 aa).

Residues 38 to 151 (TFNGNAGFKV…KDNGRRIDIH (114 aa)) enclose the sHSP domain.

It belongs to the small heat shock protein (HSP20) family.

Probable chaperone. The chain is 18 kDa heat shock protein (hsp18) from Clostridium acetobutylicum (strain ATCC 824 / DSM 792 / JCM 1419 / IAM 19013 / LMG 5710 / NBRC 13948 / NRRL B-527 / VKM B-1787 / 2291 / W).